A 446-amino-acid chain; its full sequence is Tubulin beta-6 chain (446 aa).

Positions 1-4 (MREI) match the MREI motif motif. Residues Gln11, Glu69, Ser138, Gly142, Thr143, Gly144, Asn204, and Asn226 each contribute to the GTP site. Glu69 contacts Mg(2+). Positions 419–446 (VSEYQQYQDATADVEEYEEAEASPEKET) are disordered. Residues 430 to 440 (ADVEEYEEAEA) are compositionally biased toward acidic residues.

This sequence belongs to the tubulin family. Dimer of alpha and beta chains. A typical microtubule is a hollow water-filled tube with an outer diameter of 25 nm and an inner diameter of 15 nM. Alpha-beta heterodimers associate head-to-tail to form protofilaments running lengthwise along the microtubule wall with the beta-tubulin subunit facing the microtubule plus end conferring a structural polarity. Microtubules usually have 13 protofilaments but different protofilament numbers can be found in some organisms and specialized cells. Mg(2+) is required as a cofactor. In terms of processing, some glutamate residues at the C-terminus are polyglycylated, resulting in polyglycine chains on the gamma-carboxyl group. Glycylation is mainly limited to tubulin incorporated into axonemes (cilia and flagella) whereas glutamylation is prevalent in neuronal cells, centrioles, axonemes, and the mitotic spindle. Both modifications can coexist on the same protein on adjacent residues, and lowering polyglycylation levels increases polyglutamylation, and reciprocally. The precise function of polyglycylation is still unclear. Some glutamate residues at the C-terminus are polyglutamylated, resulting in polyglutamate chains on the gamma-carboxyl group. Polyglutamylation plays a key role in microtubule severing by spastin (SPAST). SPAST preferentially recognizes and acts on microtubules decorated with short polyglutamate tails: severing activity by SPAST increases as the number of glutamates per tubulin rises from one to eight, but decreases beyond this glutamylation threshold. Highly expressed in bone marrow.

It is found in the cytoplasm. The protein resides in the cytoskeleton. Its function is as follows. Tubulin is the major constituent of microtubules, a cylinder consisting of laterally associated linear protofilaments composed of alpha- and beta-tubulin heterodimers. Microtubules grow by the addition of GTP-tubulin dimers to the microtubule end, where a stabilizing cap forms. Below the cap, tubulin dimers are in GDP-bound state, owing to GTPase activity of alpha-tubulin. The sequence is that of Tubulin beta-6 chain from Gallus gallus (Chicken).